We begin with the raw amino-acid sequence, 151 residues long: Large ribosomal subunit protein bL9 (151 aa).

This sequence belongs to the bacterial ribosomal protein bL9 family.

Its function is as follows. Binds to the 23S rRNA. This Desulforapulum autotrophicum (strain ATCC 43914 / DSM 3382 / VKM B-1955 / HRM2) (Desulfobacterium autotrophicum) protein is Large ribosomal subunit protein bL9.